The sequence spans 173 residues: Crossover junction endodeoxyribonuclease RuvC (173 aa).

Active-site residues include D8, E67, and D139. Residues D8, E67, and D139 each contribute to the Mg(2+) site.

The protein belongs to the RuvC family. Homodimer which binds Holliday junction (HJ) DNA. The HJ becomes 2-fold symmetrical on binding to RuvC with unstacked arms; it has a different conformation from HJ DNA in complex with RuvA. In the full resolvosome a probable DNA-RuvA(4)-RuvB(12)-RuvC(2) complex forms which resolves the HJ. Mg(2+) serves as cofactor.

Its subcellular location is the cytoplasm. The enzyme catalyses Endonucleolytic cleavage at a junction such as a reciprocal single-stranded crossover between two homologous DNA duplexes (Holliday junction).. Functionally, the RuvA-RuvB-RuvC complex processes Holliday junction (HJ) DNA during genetic recombination and DNA repair. Endonuclease that resolves HJ intermediates. Cleaves cruciform DNA by making single-stranded nicks across the HJ at symmetrical positions within the homologous arms, yielding a 5'-phosphate and a 3'-hydroxyl group; requires a central core of homology in the junction. The consensus cleavage sequence is 5'-(A/T)TT(C/G)-3'. Cleavage occurs on the 3'-side of the TT dinucleotide at the point of strand exchange. HJ branch migration catalyzed by RuvA-RuvB allows RuvC to scan DNA until it finds its consensus sequence, where it cleaves and resolves the cruciform DNA. The sequence is that of Crossover junction endodeoxyribonuclease RuvC from Tolumonas auensis (strain DSM 9187 / NBRC 110442 / TA 4).